The primary structure comprises 259 residues: uncharacterized protein (259 aa).

The region spanning 4–243 (INLKNINLTR…KILTDFYQEK (240 aa)) is the ABC transporter domain. 36 to 43 (GLNGSGKS) contributes to the ATP binding site.

The protein belongs to the ABC transporter superfamily.

This is an uncharacterized protein from Lactococcus lactis subsp. lactis (strain IL1403) (Streptococcus lactis).